A 168-amino-acid polypeptide reads, in one-letter code: Putative B3 domain-containing protein Os10g0158600 (168 aa).

The TF-B3 DNA-binding region spans 4–97 (VVFASARLNA…KARVMLLNRQ (94 aa)). Residues 105 to 151 (KTPSTTSSDKNRSLSPSDQLTRASTSAHPSTSKSIPPLRNGTGSTKR) form a disordered region. Residues 106-138 (TPSTTSSDKNRSLSPSDQLTRASTSAHPSTSKS) are compositionally biased toward polar residues.

It localises to the nucleus. In Oryza sativa subsp. japonica (Rice), this protein is Putative B3 domain-containing protein Os10g0158600.